Reading from the N-terminus, the 387-residue chain is Early growth response protein 3 (387 aa).

Positions 241–283 are disordered; that stretch reads PGFGSLPQPPLTLKPIRPRKYPNRPSKTPLHERPHACPAEGCD. The segment covering 269 to 283 has biased composition (basic and acidic residues); the sequence is PLHERPHACPAEGCD. 3 consecutive C2H2-type zinc fingers follow at residues 275–299, 305–327, and 333–355; these read HACP…LRIH, FQCR…IRTH, and FACE…AKIH. The segment at 348–387 is disordered; the sequence is RKRHAKIHLKQKEKKSEKGGAPSASSAPTVSLAPVVTTCA. The span at 350-360 shows a compositional bias: basic residues; the sequence is RHAKIHLKQKE.

It belongs to the EGR C2H2-type zinc-finger protein family.

The protein resides in the nucleus. Functionally, probable transcription factor involved in muscle spindle development. In Mus musculus (Mouse), this protein is Early growth response protein 3 (Egr3).